Here is a 360-residue protein sequence, read N- to C-terminus: NAD(P)H-quinone oxidoreductase subunit 1, chloroplastic (360 aa).

9 helical membrane passes run 27–47 (IWIF…VLVI), 98–118 (FSIG…VIPF), 129–149 (IGIF…LMSG), 165–185 (AAQS…ISLL), 203–223 (FWGW…ISSL), 248–268 (YSGI…LISS), 269–289 (LFVT…ISIL), 297–317 (IFGT…FLFI), and 340–360 (FLLP…LFSL).

The protein belongs to the complex I subunit 1 family. In terms of assembly, NDH is composed of at least 16 different subunits, 5 of which are encoded in the nucleus.

The protein localises to the plastid. It is found in the chloroplast thylakoid membrane. The catalysed reaction is a plastoquinone + NADH + (n+1) H(+)(in) = a plastoquinol + NAD(+) + n H(+)(out). The enzyme catalyses a plastoquinone + NADPH + (n+1) H(+)(in) = a plastoquinol + NADP(+) + n H(+)(out). Functionally, NDH shuttles electrons from NAD(P)H:plastoquinone, via FMN and iron-sulfur (Fe-S) centers, to quinones in the photosynthetic chain and possibly in a chloroplast respiratory chain. The immediate electron acceptor for the enzyme in this species is believed to be plastoquinone. Couples the redox reaction to proton translocation, and thus conserves the redox energy in a proton gradient. The polypeptide is NAD(P)H-quinone oxidoreductase subunit 1, chloroplastic (Barbarea verna (Land cress)).